A 73-amino-acid polypeptide reads, in one-letter code: Translation initiation factor IF-1 (73 aa).

An S1-like domain is found at 1–73; sequence MPKKDGAIEI…TRGRIVYRYK (73 aa).

Belongs to the IF-1 family. In terms of assembly, component of the 30S ribosomal translation pre-initiation complex which assembles on the 30S ribosome in the order IF-2 and IF-3, IF-1 and N-formylmethionyl-tRNA(fMet); mRNA recruitment can occur at any time during PIC assembly.

Its subcellular location is the cytoplasm. Its function is as follows. One of the essential components for the initiation of protein synthesis. Stabilizes the binding of IF-2 and IF-3 on the 30S subunit to which N-formylmethionyl-tRNA(fMet) subsequently binds. Helps modulate mRNA selection, yielding the 30S pre-initiation complex (PIC). Upon addition of the 50S ribosomal subunit IF-1, IF-2 and IF-3 are released leaving the mature 70S translation initiation complex. The sequence is that of Translation initiation factor IF-1 from Salinispora arenicola (strain CNS-205).